A 349-amino-acid chain; its full sequence is 5-deoxyribose 1-phosphate isomerase (349 aa).

Residues 49-51, arginine 92, and glutamine 199 contribute to the substrate site; that span reads RGA. Catalysis depends on aspartate 240, which acts as the Proton donor. 250 to 251 lines the substrate pocket; that stretch reads NK.

Belongs to the EIF-2B alpha/beta/delta subunits family. DrdI subfamily.

It carries out the reaction 5-deoxy-alpha-D-ribose 1-phosphate = 5-deoxy-D-ribulose 1-phosphate. It functions in the pathway carbohydrate degradation. In terms of biological role, catalyzes the isomerization of 5-deoxy-alpha-D-ribose 1-phosphate to 5-deoxy-D-ribulose 1-phosphate, as part of a 5-deoxyribose salvage pathway that recycles this toxic radical SAM enzyme by-product to mainstream metabolites. The protein is 5-deoxyribose 1-phosphate isomerase of Clostridium botulinum (strain 657 / Type Ba4).